The following is a 349-amino-acid chain: Peroxidase 23 (349 aa).

A signal peptide spans 1-29 (MGFSSSLSCSAMGALIVGCLLLQASNSNA). Q30 bears the Pyrrolidone carboxylic acid mark. Cystine bridges form between C40-C120, C73-C78, C126-C329, and C206-C238. Catalysis depends on H71, which acts as the Proton acceptor. D72, V75, G77, D79, and S81 together coordinate Ca(2+). N86 is a glycosylation site (N-linked (GlcNAc...) asparagine). P168 is a substrate binding site. Residue H199 coordinates heme b. T200 serves as a coordination point for Ca(2+). Residues N217 and N243 are each glycosylated (N-linked (GlcNAc...) asparagine). Ca(2+) contacts are provided by D251, T254, and D259.

This sequence belongs to the peroxidase family. Classical plant (class III) peroxidase subfamily. It depends on heme b as a cofactor. Ca(2+) is required as a cofactor.

It localises to the secreted. The protein resides in the vacuole. The enzyme catalyses 2 a phenolic donor + H2O2 = 2 a phenolic radical donor + 2 H2O. In terms of biological role, removal of H(2)O(2), oxidation of toxic reductants, biosynthesis and degradation of lignin, suberization, auxin catabolism, response to environmental stresses such as wounding, pathogen attack and oxidative stress. These functions might be dependent on each isozyme/isoform in each plant tissue. This Arabidopsis thaliana (Mouse-ear cress) protein is Peroxidase 23 (PER23).